Consider the following 557-residue polypeptide: Venom carboxylesterase-6 (557 aa).

An N-terminal signal peptide occupies residues 1-21 (MYMLKLSYILLFLGFVKFSWQ). A disulfide bond links Cys-88 and Cys-108. Residue Asn-145 is glycosylated (N-linked (GlcNAc...) asparagine). Ser-212 functions as the Acyl-ester intermediate in the catalytic mechanism. Residues Cys-264 and Cys-275 are joined by a disulfide bond. Glu-341 functions as the Charge relay system in the catalytic mechanism. N-linked (GlcNAc...) asparagine glycosylation is present at Asn-374. The Charge relay system role is filled by His-464. Residues Asn-478, Asn-528, and Asn-542 are each glycosylated (N-linked (GlcNAc...) asparagine).

This sequence belongs to the type-B carboxylesterase/lipase family. Expressed by the venom gland.

It is found in the secreted. It carries out the reaction a carboxylic ester + H2O = an alcohol + a carboxylate + H(+). This Apis mellifera (Honeybee) protein is Venom carboxylesterase-6.